Here is a 257-residue protein sequence, read N- to C-terminus: Phosphatidylglycerol--prolipoprotein diacylglyceryl transferase (257 aa).

7 helical membrane-spanning segments follow: residues 13–33 (FGPIAVHWYGIFMAISIAVGG), 49–69 (FLLNLLMIVVIFGVIGARLMF), 88–108 (IYEGGLSWHGAVLGGFLAGLY), 123–143 (FAVVGLALGNMLVRVGNIFNH), 152–172 (FFFGRWPAQLVGVAIGAFLLI), 186–202 (YQFWSFIFYYQLLRGVF), and 223–243 (IGLFTMTQVATPFILILAYWM). Position 136 (Arg136) interacts with a 1,2-diacyl-sn-glycero-3-phospho-(1'-sn-glycerol).

It belongs to the Lgt family.

The protein localises to the cell membrane. It catalyses the reaction L-cysteinyl-[prolipoprotein] + a 1,2-diacyl-sn-glycero-3-phospho-(1'-sn-glycerol) = an S-1,2-diacyl-sn-glyceryl-L-cysteinyl-[prolipoprotein] + sn-glycerol 1-phosphate + H(+). Its pathway is protein modification; lipoprotein biosynthesis (diacylglyceryl transfer). In terms of biological role, catalyzes the transfer of the diacylglyceryl group from phosphatidylglycerol to the sulfhydryl group of the N-terminal cysteine of a prolipoprotein, the first step in the formation of mature lipoproteins. This chain is Phosphatidylglycerol--prolipoprotein diacylglyceryl transferase, found in Caldanaerobacter subterraneus subsp. tengcongensis (strain DSM 15242 / JCM 11007 / NBRC 100824 / MB4) (Thermoanaerobacter tengcongensis).